The sequence spans 443 residues: CBL-interacting protein kinase 2 (443 aa).

In terms of domain architecture, Protein kinase spans 13-267 (YEMGKLLGQG…MDKIMENPWF (255 aa)). ATP is bound by residues 19–27 (LGQGTFAKV) and K42. D135 functions as the Proton acceptor in the catalytic mechanism. Residues 153 to 182 (DFGLSALADCKRQDGLLHTTCGTPAYVAPE) form an activation loop region. The NAF domain occupies 302-329 (TLEKKPSNLNAFDIISLSTGLDLSGMFE). Residues 333–362 (KKESKFTSTSTASTIISKIEDIAKGLRLKL) are PPI.

It belongs to the protein kinase superfamily. CAMK Ser/Thr protein kinase family. SNF1 subfamily. Requires Mn(2+) as cofactor.

The enzyme catalyses L-seryl-[protein] + ATP = O-phospho-L-seryl-[protein] + ADP + H(+). It catalyses the reaction L-threonyl-[protein] + ATP = O-phospho-L-threonyl-[protein] + ADP + H(+). Its function is as follows. CIPK serine-threonine protein kinases interact with CBL proteins. Binding of a CBL protein to the regulatory NAF domain of CIPK protein lead to the activation of the kinase in a calcium-dependent manner. This Oryza sativa subsp. japonica (Rice) protein is CBL-interacting protein kinase 2 (CIPK2).